A 961-amino-acid chain; its full sequence is G protein-coupled receptor GPR1 (961 aa).

Over 1-56 (MITEGFPPNLNALKGSSLLEKRVDSLRQLNTTTVNQLLGLPGMTSTFTAPQLLQLR) the chain is Extracellular. The chain crosses the membrane as a helical span at residues 57-79 (IIAITASAVSLIAGCLGMFFLSK). The Cytoplasmic portion of the chain corresponds to 80 to 91 (MDKRRKVFRHDL). Residues 92-114 (IAFLIICDFLKAFILMIYPMIIL) form a helical membrane-spanning segment. The Extracellular segment spans residues 115-133 (INNSVYATPAFFNTLGWFT). A helical transmembrane segment spans residues 134–156 (AFAIEGADMAIMIFAIHFAILIF). At 157-178 (KPNWKWRNKRSGNMEGGLYKKR) the chain is on the cytoplasmic side. A helical transmembrane segment spans residues 179–198 (SYIWPITALVPAILASLAFI). The Extracellular portion of the chain corresponds to 199 to 250 (NYNKLNDDSDTTIILDNNNYNFPDSPRQGGYKPWSAWCYLPPKPYWYKIVLS). A helical transmembrane segment spans residues 251-273 (WGPRYFIIIFIFAVYLSIYIFIT). Topologically, residues 274–619 (SESKRIKAQI…KKRRAQIQKN (346 aa)) are cytoplasmic. Ser373 carries the post-translational modification Phosphoserine. The interval 468–568 (AMYDNKNDNS…PADNIPTLSN (101 aa)) is disordered. The segment covering 502 to 558 (NNNNDNDNDNNNSNNNNNNNNNNNNNNNNNNNNNNNNNNNNNNSNNIKNNVDNNNTN) has biased composition (low complexity). The chain crosses the membrane as a helical span at residues 620-642 (LRAIFIYPLSYIGIWLFPIIADA). Residues 643-822 (LQYNHEIKHG…AMLNNITAEE (180 aa)) are Extracellular-facing. Residues 783–796 (DSNDNKRTESDETK) are compositionally biased toward basic and acidic residues. The tract at residues 783–805 (DSNDNKRTESDETKTNSSDRSLP) is disordered. Residues 823–843 (VEVPLFWRIIHHIPMLGGIDL) traverse the membrane as a helical segment. Topologically, residues 844–961 (DELNRLLKIR…LIAFLRNGPL (118 aa)) are cytoplasmic. Phosphoserine is present on Ser903.

It belongs to the G-protein coupled receptor GPR1/git3 family.

It localises to the cell membrane. Functionally, seems to associate with GPA2 and act as G protein-coupled receptor that senses glucose and controls filamentous growth. It acts upstream of adenylate cyclase and is required for glucose activation of cAMP synthesis in concert with a glucose phosphorylation-dependent mechanism. The sequence is that of G protein-coupled receptor GPR1 (GPR1) from Saccharomyces cerevisiae (strain ATCC 204508 / S288c) (Baker's yeast).